We begin with the raw amino-acid sequence, 185 residues long: MKKQDLSVKNVVAMGIGSAIYVILTRFTSIPTPIPNTNIELVFPFLALFAAIYGAKVGFAVGFIGHTLSDFIMYGQTWWSWVLATGVLGLIIGLASKKLDLKNGIFGIKQILLFNIVQIFANIIAWIVVAPIGDIIIYSEPANKVFVQGISATLSNGITILVVGTLLLKAYAGTKIKKGSLRKED.

Helical transmembrane passes span 11-31, 45-65, 72-92, 111-131, and 145-165; these read VVAM…TSIP, FLAL…GFIG, IMYG…GLII, ILLF…VVAP, and VFVQ…VVGT.

Belongs to the UPF0397 family.

It localises to the cell membrane. This chain is UPF0397 protein lhv_0999, found in Lactobacillus helveticus (strain DPC 4571).